The sequence spans 231 residues: NADH-ubiquinone oxidoreductase chain 4 (231 aa).

The next 6 membrane-spanning stretches (helical) occupy residues 1-21, 34-54, 63-85, 89-111, 128-148, and 156-176; these read PIAGSMVLAAILLKLGGYGII, MFLPFIVLALWGAILANLTCL, IAYSSVSHMGLVVAAIMIQTPWG, AMTLMIAHGFTSSALFCLANTTY, ILPMATTWWLLTNLMNIAIPP, and LLIMSALFSWCPTTIILLGLS.

It belongs to the complex I subunit 4 family.

It localises to the mitochondrion membrane. The catalysed reaction is a ubiquinone + NADH + 5 H(+)(in) = a ubiquinol + NAD(+) + 4 H(+)(out). Its function is as follows. Core subunit of the mitochondrial membrane respiratory chain NADH dehydrogenase (Complex I) that is believed to belong to the minimal assembly required for catalysis. Complex I functions in the transfer of electrons from NADH to the respiratory chain. The immediate electron acceptor for the enzyme is believed to be ubiquinone. The polypeptide is NADH-ubiquinone oxidoreductase chain 4 (MT-ND4) (Gloydius intermedius (Central Asian pit viper)).